Reading from the N-terminus, the 674-residue chain is Primary amine oxidase (674 aa).

Residues methionine 1–serine 25 form the signal peptide. The N-linked (GlcNAc...) asparagine glycan is linked to asparagine 156. Residues cysteine 162 and cysteine 183 are joined by a disulfide bond. Polar residues predominate over residues glutamate 226–serine 236. Residues glutamate 226 to proline 251 are disordered. Phenylalanine 323–serine 334 contacts substrate. Catalysis depends on aspartate 325, which acts as the Proton acceptor. An intrachain disulfide couples cysteine 344 to cysteine 370. Asparagine 389 carries an N-linked (GlcNAc...) asparagine glycan. Residue valine 409–asparagine 414 participates in substrate binding. Catalysis depends on tyrosine 412, which acts as the Schiff-base intermediate with substrate; via topaquinone. Tyrosine 412 carries the 2',4',5'-topaquinone modification. 2 residues coordinate Cu cation: histidine 467 and histidine 469. 5 residues coordinate Mn(2+): aspartate 476, phenylalanine 477, aspartate 478, aspartate 617, and isoleucine 618. Histidine 628 serves as a coordination point for Cu cation.

Belongs to the copper/topaquinone oxidase family. Homodimer. It depends on Cu cation as a cofactor. Mn(2+) is required as a cofactor. Requires L-topaquinone as cofactor. Topaquinone (TPQ) is generated by copper-dependent autoxidation of a specific tyrosyl residue.

The catalysed reaction is a primary methyl amine + O2 + H2O = an aldehyde + H2O2 + NH4(+). This is Primary amine oxidase from Pisum sativum (Garden pea).